The sequence spans 388 residues: DNA replication and repair protein RecF (388 aa).

30-37 (GNNAQGKS) contacts ATP.

The protein belongs to the RecF family.

The protein resides in the cytoplasm. In terms of biological role, the RecF protein is involved in DNA metabolism; it is required for DNA replication and normal SOS inducibility. RecF binds preferentially to single-stranded, linear DNA. It also seems to bind ATP. The protein is DNA replication and repair protein RecF of Picosynechococcus sp. (strain ATCC 27264 / PCC 7002 / PR-6) (Agmenellum quadruplicatum).